Consider the following 505-residue polypeptide: Glutamate--tRNA ligase (505 aa).

A 'HIGH' region motif is present at residues 12–22 (PSPTGPLHIGG). Residues 260–264 (KLSKR) carry the 'KMSKS' region motif. Lys263 lines the ATP pocket.

The protein belongs to the class-I aminoacyl-tRNA synthetase family. Glutamate--tRNA ligase type 1 subfamily. Monomer.

It localises to the cytoplasm. It carries out the reaction tRNA(Glu) + L-glutamate + ATP = L-glutamyl-tRNA(Glu) + AMP + diphosphate. In terms of biological role, catalyzes the attachment of glutamate to tRNA(Glu) in a two-step reaction: glutamate is first activated by ATP to form Glu-AMP and then transferred to the acceptor end of tRNA(Glu). In Porphyromonas gingivalis (strain ATCC BAA-308 / W83), this protein is Glutamate--tRNA ligase.